Reading from the N-terminus, the 683-residue chain is MLFIFNFLFSPLPTPALICILTFGAAIFLWLITRPQPVLPLLDLNNQSVGIEGGARKGVSQKNNDLTSCCFSDAKTMYEVFQRGLAVSDNGPCLGYRKPNQPYRWLSYKQVSDRAEYLGSCLLHKGYKSSPDQFVGIFAQNRPEWIISELACYTYSMVAVPLYDTLGPEAIVHIVNKADIAMVICDTPQKALVLIGNVEKGFTPSLKVIILMDPFDDDLKQRGEKSGIEILSLYDAENLGKEHFRKPVPPSPEDLSVICFTSGTTGDPKGAMITHQNIVSNAAAFLKCVEHAYEPTPDDVAISYLPLAHMFERIVQAVVYSCGARVGFFQGDIRLLADDMKTLKPTLFPAVPRLLNRIYDKVQNEAKTPLKKFLLKLAVSSKFKELQKGIIRHDSFWDKLIFAKIQDSLGGRVRVIVTGAAPMSTSVMTFFRAAMGCQVYEAYGQTECTGGCTFTLPGDWTSGHVGVPLACNYVKLEDVADMNYFTVNNEGEVCIKGTNVFKGYLKDPEKTQEALDSDGWLHTGDIGRWLPNGTLKIIDRKKNIFKLAQGEYIAPEKIENIYNRSQPVLQIFVHGESLRSSLVGVVVPDTDVLPSFAAKLGVKGSFEELCQNQVVREAILEDLQKIGKESGLKTFEQVKAIFLHPEPFSIENGLLTPTLKAKRGELSKYFRTQIDSLYEHIQD.

A helical; Signal-anchor for type III membrane protein membrane pass occupies residues 12-32 (LPTPALICILTFGAAIFLWLI). Position 32 is a phosphoserine (Ile32). At 33-683 (TRPQPVLPLL…IDSLYEHIQD (651 aa)) the chain is on the cytoplasmic side. Position 361 is an N6-acetyllysine (Lys361).

The protein belongs to the ATP-dependent AMP-binding enzyme family. Requires Mg(2+) as cofactor.

Its subcellular location is the mitochondrion. The protein localises to the endoplasmic reticulum. It localises to the mitochondrion outer membrane. The protein resides in the endoplasmic reticulum membrane. It is found in the cell membrane. The enzyme catalyses a long-chain fatty acid + ATP + CoA = a long-chain fatty acyl-CoA + AMP + diphosphate. The catalysed reaction is (5Z,8Z,11Z,14Z)-eicosatetraenoate + ATP + CoA = (5Z,8Z,11Z,14Z)-eicosatetraenoyl-CoA + AMP + diphosphate. It carries out the reaction hexadecanoate + ATP + CoA = hexadecanoyl-CoA + AMP + diphosphate. It catalyses the reaction (E)-hexadec-2-enoate + ATP + CoA = (2E)-hexadecenoyl-CoA + AMP + diphosphate. The enzyme catalyses 15-hydroxy-(5Z,8Z,11Z,13E)-eicosatetraenoate + ATP + CoA = 15-hydroxy-(5Z,8Z,11Z,13E)-eicosatetraenoyl-CoA + AMP + diphosphate. The catalysed reaction is 12-hydroxy-(5Z,8Z,10E,14Z)-eicosatetraenoate + ATP + CoA = 12-hydroxy-(5Z,8Z,10E,14Z)-eicosatetraenoyl-CoA + AMP + diphosphate. It carries out the reaction 5-hydroxy-(6E,8Z,11Z,14Z)-eicosatetraenoate + ATP + CoA = 5-hydroxy-(6E,8Z,11Z,14Z)-eicosatetraenoyl-CoA + AMP + diphosphate. It catalyses the reaction 14,15-epoxy-(5Z,8Z,11Z)-eicosatrienoate + ATP + CoA = 14,15-epoxy-(5Z,8Z,11Z)-eicosatrienoyl-CoA + AMP + diphosphate. The enzyme catalyses 11,12-epoxy-(5Z,8Z,14Z)-eicosatrienoate + ATP + CoA = 11,12-epoxy-(5Z,8Z,14Z)-eicosatrienoyl-CoA + AMP + diphosphate. The catalysed reaction is (9Z)-octadecenoate + ATP + CoA = (9Z)-octadecenoyl-CoA + AMP + diphosphate. In terms of biological role, catalyzes the conversion of long-chain fatty acids to their active form acyl-CoAs for both synthesis of cellular lipids, and degradation via beta-oxidation. ACSL5 may activate fatty acids from exogenous sources for the synthesis of triacylglycerol destined for intracellular storage. Utilizes a wide range of saturated fatty acids with a preference for C16-C18 unsaturated fatty acids. It was suggested that it may also stimulate fatty acid oxidation. At the villus tip of the crypt-villus axis of the small intestine may sensitize epithelial cells to apoptosis specifically triggered by the death ligand TRAIL. May have a role in the survival of glioma cells. The chain is Long-chain-fatty-acid--CoA ligase 5 from Homo sapiens (Human).